A 122-amino-acid chain; its full sequence is Large ribosomal subunit protein uL14 (122 aa).

This sequence belongs to the universal ribosomal protein uL14 family. Part of the 50S ribosomal subunit. Forms a cluster with proteins L3 and L19. In the 70S ribosome, L14 and L19 interact and together make contacts with the 16S rRNA in bridges B5 and B8.

In terms of biological role, binds to 23S rRNA. Forms part of two intersubunit bridges in the 70S ribosome. This chain is Large ribosomal subunit protein uL14, found in Amoebophilus asiaticus (strain 5a2).